Here is a 218-residue protein sequence, read N- to C-terminus: Large ribosomal subunit protein bL25 (218 aa).

The interval 197–218 (PAEESGEKPVAHIEEKESTEKE) is disordered. The segment covering 201-218 (SGEKPVAHIEEKESTEKE) has biased composition (basic and acidic residues).

The protein belongs to the bacterial ribosomal protein bL25 family. CTC subfamily. As to quaternary structure, part of the 50S ribosomal subunit; part of the 5S rRNA/L5/L18/L25 subcomplex. Contacts the 5S rRNA. Binds to the 5S rRNA independently of L5 and L18.

This is one of the proteins that binds to the 5S RNA in the ribosome where it forms part of the central protuberance. The sequence is that of Large ribosomal subunit protein bL25 from Dehalococcoides mccartyi (strain ATCC BAA-2100 / JCM 16839 / KCTC 5957 / BAV1).